A 140-amino-acid polypeptide reads, in one-letter code: Cystatin-C (140 aa).

Positions Met1–Ala20 are cleaved as a signal peptide. Residues Gln75–Gly79 carry the Secondary area of contact motif. Intrachain disulfides connect Cys93/Cys103 and Cys117/Cys137.

This sequence belongs to the cystatin family.

It localises to the secreted. Functionally, as an inhibitor of cysteine proteinases, this protein is thought to serve an important physiological role as a local regulator of this enzyme activity. This Mus musculus (Mouse) protein is Cystatin-C (Cst3).